Consider the following 336-residue polypeptide: UDP-N-acetylglucosamine--N-acetylmuramyl-(pentapeptide) pyrophosphoryl-undecaprenol N-acetylglucosamine transferase (336 aa).

Residues 10–12 (TGG), Asn124, Arg157, Ser179, and Gln277 contribute to the UDP-N-acetyl-alpha-D-glucosamine site.

This sequence belongs to the glycosyltransferase 28 family. MurG subfamily.

It is found in the cell inner membrane. The catalysed reaction is di-trans,octa-cis-undecaprenyl diphospho-N-acetyl-alpha-D-muramoyl-L-alanyl-D-glutamyl-meso-2,6-diaminopimeloyl-D-alanyl-D-alanine + UDP-N-acetyl-alpha-D-glucosamine = di-trans,octa-cis-undecaprenyl diphospho-[N-acetyl-alpha-D-glucosaminyl-(1-&gt;4)]-N-acetyl-alpha-D-muramoyl-L-alanyl-D-glutamyl-meso-2,6-diaminopimeloyl-D-alanyl-D-alanine + UDP + H(+). The protein operates within cell wall biogenesis; peptidoglycan biosynthesis. Cell wall formation. Catalyzes the transfer of a GlcNAc subunit on undecaprenyl-pyrophosphoryl-MurNAc-pentapeptide (lipid intermediate I) to form undecaprenyl-pyrophosphoryl-MurNAc-(pentapeptide)GlcNAc (lipid intermediate II). This Wolinella succinogenes (strain ATCC 29543 / DSM 1740 / CCUG 13145 / JCM 31913 / LMG 7466 / NCTC 11488 / FDC 602W) (Vibrio succinogenes) protein is UDP-N-acetylglucosamine--N-acetylmuramyl-(pentapeptide) pyrophosphoryl-undecaprenol N-acetylglucosamine transferase.